The primary structure comprises 131 residues: Profilin-2 (131 aa).

A disulfide bridge connects residues Cys13 and Cys115. The Involved in PIP2 interaction signature appears at 81–97 (AVIRGKKGPGGVTVKKT). Phosphothreonine is present on Thr111.

Belongs to the profilin family. As to quaternary structure, multimer. Occurs in many kinds of cells as a complex with monomeric actin in a 1:1 ratio. Phosphorylated by MAP kinases.

The protein localises to the cytoplasm. Its subcellular location is the cytoskeleton. Functionally, binds to actin and affects the structure of the cytoskeleton. At high concentrations, profilin prevents the polymerization of actin, whereas it enhances it at low concentrations. By binding to PIP2, it inhibits the formation of IP3 and DG. The chain is Profilin-2 from Hevea brasiliensis (Para rubber tree).